We begin with the raw amino-acid sequence, 202 residues long: Na(+)-translocating NADH-quinone reductase subunit E (202 aa).

Transmembrane regions (helical) follow at residues 11 to 31, 35 to 55, 81 to 101, 114 to 134, 144 to 164, and 180 to 200; these read SVFI…FIAV, IETA…TVPA, FIAL…LEMV, GIFL…LFMI, VVYG…MAGV, and LGIT…FSGI.

Belongs to the NqrDE/RnfAE family. Composed of six subunits; NqrA, NqrB, NqrC, NqrD, NqrE and NqrF.

It localises to the cell inner membrane. It catalyses the reaction a ubiquinone + n Na(+)(in) + NADH + H(+) = a ubiquinol + n Na(+)(out) + NAD(+). In terms of biological role, NQR complex catalyzes the reduction of ubiquinone-1 to ubiquinol by two successive reactions, coupled with the transport of Na(+) ions from the cytoplasm to the periplasm. NqrA to NqrE are probably involved in the second step, the conversion of ubisemiquinone to ubiquinol. In Methylococcus capsulatus (strain ATCC 33009 / NCIMB 11132 / Bath), this protein is Na(+)-translocating NADH-quinone reductase subunit E.